A 246-amino-acid chain; its full sequence is MGAPLRHCLLVAAALSLGCGVAAADPGYVANVIPCEQRTLVLSAFPAEADAVLAHTALDANPVVVADRRRYYLGSISGKKVIVAMTGIGLVNATNTTETAFARFTCASSIAIAAVMFSGVAGGAGRTSIGDVAIPARWTLDNGATFRGVDPGMLATAQTLSVVLDNINTLGNPVCLCRNVPVVRLNHLGRQPQLFVGGDGSSSDKNNGQAFPCIPNGGSVFAANPVVHPIAHLAIPVTFSRRRDPG.

The N-terminal stretch at 1–24 (MGAPLRHCLLVAAALSLGCGVAAA) is a signal peptide. 2 helical membrane-spanning segments follow: residues 71-91 (YYLG…IGLV) and 104-124 (FTCA…AGGA).

It is found in the cell membrane. This is an uncharacterized protein from Mycobacterium tuberculosis (strain ATCC 25618 / H37Rv).